Consider the following 503-residue polypeptide: MQMIPGDPFSISSSMGGFVHQETHLHHLQQQIPDLNPNSNPNPNAKPNSSSAKKKRNQPGTPDPDADVIALSPTTLMATNRFVCEICNKGFQRDQNLQLHRRGHNLPWKLKQRSKQEVIKKKVYICPIKTCVHHDASRALGDLTGIKKHYSRKHGEKKWKCEKCSKKYAVQSDWKAHAKTCGTREYKCDCGTLFSRKDSFITHRAFCDALTEEGARMSSLSNNNPVISTTNLNFGNESNVMNNPNLPHGFVHRGVHHPDINAAISQFGLGFGHDLSAMHAQGLSEMVQMASTGNHHLFPSSSSSLPDFSGHHQFQIPMTSTNPSLTLSSSSTSQQTSASLQHQTLKDSSFSPLFSSSSENKQNKPLSPMSATALLQKAAQMGSTRSNSSTAPSFFAGPTMTSSSATASPPPRSSSPMMIQQQLNNFNTNVLRENHNRAPPPLSGVSTSSVDNNPFQSNRSGLNPAQQMGLTRDFLGVSNEHHPHQTGRRPFLPQELARFAPLG.

Residues 32 to 51 are compositionally biased toward low complexity; the sequence is IPDLNPNSNPNPNAKPNSSS. Residues 32 to 68 are disordered; that stretch reads IPDLNPNSNPNPNAKPNSSSAKKKRNQPGTPDPDADV. Serine 72 bears the Phosphoserine mark. 2 consecutive C2H2-type zinc fingers follow at residues 82-104 and 124-154; these read FVCEICNKGFQRDQNLQLHRRGH and YICPIKTCVHHDASRALGDLTGIKKHYSRKH. 2 consecutive short sequence motifs (nuclear localization signal) follow at residues 100 to 107 and 146 to 153; these read HRRGHNLP and IKKHYSRK. Residues 159-182 form a C2H2-type 2; degenerate zinc finger; sequence WKCEKCSKKYAVQSDWKAHAKTCG. Zn(2+) contacts are provided by cysteine 161, cysteine 164, histidine 177, cysteine 181, cysteine 188, cysteine 190, histidine 203, and cysteine 207. The CCHC-type 2; atypical zinc-finger motif lies at 186–209; it reads YKCDCGTLFSRKDSFITHRAFCDA. The SHR-binding stretch occupies residues 196-208; that stretch reads RKDSFITHRAFCD. Disordered stretches follow at residues 301–417 and 432–465; these read SSSS…SSPM and RENHNRAPPPLSGVSTSSVDNNPFQSNRSGLNPA. The segment covering 319–358 has biased composition (low complexity); sequence TSTNPSLTLSSSSTSQQTSASLQHQTLKDSSFSPLFSSSS. The segment covering 381–392 has biased composition (polar residues); it reads MGSTRSNSSTAP. A compositionally biased stretch (low complexity) spans 396–407; that stretch reads AGPTMTSSSATA. The span at 444 to 465 shows a compositional bias: polar residues; sequence GVSTSSVDNNPFQSNRSGLNPA.

In terms of assembly, interacts with SHR, SCR, MGP and itself. The heterodimer with SHR involves its zinc fingers. Interacts with SIEL. Binds to RGA and SCL3 competitively in the nucleus. As to expression, expressed in the quiescent center, the ground tissue stem cells and to a lesser extent in mature cortex and endodermis cells.

The protein localises to the nucleus. Functionally, transcription factor that, together with BIB, regulates tissue boundaries and asymmetric cell division by a rapid up-regulation of 'SCARECROW' (SCR), thus controlling the nuclear localization of 'SHORT-ROOT' (SHR) and restricting its action. Binds DNA via its zinc fingers. Recognizes and binds to SCL3 promoter sequence 5'-AGACAA-3' to promote its expression when in complex with RGA. Confines CYCD6 expression to the cortex-endodermis initial/daughter (CEI/CEID) tissues. Required for radial patterning and stem cell maintenance. Counteracted by 'MAGPIE' (MGP). Binds to the SCR and MGP promoter sequences. Controls position-dependent signals that regulate epidermal-cell-type patterning. In Arabidopsis thaliana (Mouse-ear cress), this protein is Zinc finger protein JACKDAW.